The following is a 1342-amino-acid chain: DNA-directed RNA polymerase subunit beta (1342 aa).

The protein belongs to the RNA polymerase beta chain family. As to quaternary structure, the RNAP catalytic core consists of 2 alpha, 1 beta, 1 beta' and 1 omega subunit. When a sigma factor is associated with the core the holoenzyme is formed, which can initiate transcription.

The catalysed reaction is RNA(n) + a ribonucleoside 5'-triphosphate = RNA(n+1) + diphosphate. DNA-dependent RNA polymerase catalyzes the transcription of DNA into RNA using the four ribonucleoside triphosphates as substrates. This is DNA-directed RNA polymerase subunit beta from Photorhabdus laumondii subsp. laumondii (strain DSM 15139 / CIP 105565 / TT01) (Photorhabdus luminescens subsp. laumondii).